The sequence spans 65 residues: MITDPKMLELLVCPITGGTLSLNRKTQELISFKAKLAYPIRDGVPIMLASEARPLQHNEKRVHKK.

The protein belongs to the UPF0434 family.

This Bartonella quintana (strain Toulouse) (Rochalimaea quintana) protein is UPF0434 protein BQ10150.